The primary structure comprises 570 residues: Glutamate--tRNA ligase (570 aa).

The 'HIGH' region motif lies at 107–117 (PNPDFVLHLGS).

The protein belongs to the class-I aminoacyl-tRNA synthetase family. Glutamate--tRNA ligase type 2 subfamily.

The protein localises to the cytoplasm. The catalysed reaction is tRNA(Glu) + L-glutamate + ATP = L-glutamyl-tRNA(Glu) + AMP + diphosphate. Its function is as follows. Catalyzes the attachment of glutamate to tRNA(Glu) in a two-step reaction: glutamate is first activated by ATP to form Glu-AMP and then transferred to the acceptor end of tRNA(Glu). This chain is Glutamate--tRNA ligase, found in Pyrobaculum calidifontis (strain DSM 21063 / JCM 11548 / VA1).